Reading from the N-terminus, the 454-residue chain is NADP-specific glutamate dehydrogenase (454 aa).

Residue Ser-2 is modified to N-acetylserine. The active site involves Lys-114.

The protein belongs to the Glu/Leu/Phe/Val dehydrogenases family. In terms of assembly, homohexamer.

It carries out the reaction L-glutamate + NADP(+) + H2O = 2-oxoglutarate + NH4(+) + NADPH + H(+). In Neurospora sitophila (Chrysonilia sitophila), this protein is NADP-specific glutamate dehydrogenase (GDH).